Here is a 57-residue protein sequence, read N- to C-terminus: DNA-directed RNA polymerase subunit Rpo6 (57 aa).

Belongs to the archaeal Rpo6/eukaryotic RPB6 RNA polymerase subunit family. As to quaternary structure, part of the RNA polymerase complex.

The protein localises to the cytoplasm. The enzyme catalyses RNA(n) + a ribonucleoside 5'-triphosphate = RNA(n+1) + diphosphate. Its function is as follows. DNA-dependent RNA polymerase (RNAP) catalyzes the transcription of DNA into RNA using the four ribonucleoside triphosphates as substrates. This is DNA-directed RNA polymerase subunit Rpo6 from Haloarcula marismortui (strain ATCC 43049 / DSM 3752 / JCM 8966 / VKM B-1809) (Halobacterium marismortui).